Consider the following 607-residue polypeptide: Arginine--tRNA ligase, cytoplasmic (607 aa).

Position 2 is an N-acetylalanine (alanine 2). A Phosphoserine modification is found at serine 15. 2 interaction with tRNA regions span residues 59 to 60 (EW) and 106 to 111 (NGPFIQ). Residues 148–153 (EFSSPN), histidine 162, tyrosine 347, aspartate 351, and glutamine 375 each bind L-arginine. A 'HIGH' region motif is present at residues 151-162 (SPNIAKPFHAGH). The interaction with tRNA stretch occupies residues 484–498 (DTGPYLQYAHSRLRS).

The protein belongs to the class-I aminoacyl-tRNA synthetase family. As to quaternary structure, monomer.

Its subcellular location is the cytoplasm. The protein localises to the cytosol. It carries out the reaction tRNA(Arg) + L-arginine + ATP = L-arginyl-tRNA(Arg) + AMP + diphosphate. Forms part of a macromolecular complex that catalyzes the attachment of specific amino acids to cognate tRNAs during protein synthesis. This chain is Arginine--tRNA ligase, cytoplasmic, found in Saccharomyces cerevisiae (strain ATCC 204508 / S288c) (Baker's yeast).